The sequence spans 382 residues: Intermediate transcription factor 3 large subunit (382 aa).

It belongs to the poxviruses A23 family. In terms of assembly, heterodimer of a 45 kDa and a 32 kDa subunit.

Its function is as follows. Acts with RNA polymerase to initiate transcription from intermediate gene promoters. This is Intermediate transcription factor 3 large subunit (VITF3L) from Camelus.